Reading from the N-terminus, the 310-residue chain is Phosphoribosylaminoimidazole-succinocarboxamide synthase (310 aa).

It belongs to the SAICAR synthetase family.

It carries out the reaction 5-amino-1-(5-phospho-D-ribosyl)imidazole-4-carboxylate + L-aspartate + ATP = (2S)-2-[5-amino-1-(5-phospho-beta-D-ribosyl)imidazole-4-carboxamido]succinate + ADP + phosphate + 2 H(+). It participates in purine metabolism; IMP biosynthesis via de novo pathway; 5-amino-1-(5-phospho-D-ribosyl)imidazole-4-carboxamide from 5-amino-1-(5-phospho-D-ribosyl)imidazole-4-carboxylate: step 1/2. This is Phosphoribosylaminoimidazole-succinocarboxamide synthase from Dechloromonas aromatica (strain RCB).